Consider the following 208-residue polypeptide: Uracil phosphoribosyltransferase (208 aa).

5-phospho-alpha-D-ribose 1-diphosphate-binding positions include Arg78, Arg103, and 130 to 138 (DPMLATGGS). Residues Ile193 and 198–200 (GDA) each bind uracil. Asp199 is a binding site for 5-phospho-alpha-D-ribose 1-diphosphate.

This sequence belongs to the UPRTase family. The cofactor is Mg(2+).

It carries out the reaction UMP + diphosphate = 5-phospho-alpha-D-ribose 1-diphosphate + uracil. It participates in pyrimidine metabolism; UMP biosynthesis via salvage pathway; UMP from uracil: step 1/1. Its activity is regulated as follows. Allosterically activated by GTP. In terms of biological role, catalyzes the conversion of uracil and 5-phospho-alpha-D-ribose 1-diphosphate (PRPP) to UMP and diphosphate. The polypeptide is Uracil phosphoribosyltransferase (Shewanella sediminis (strain HAW-EB3)).